The primary structure comprises 50 residues: Sperm protamine P1 (50 aa).

2 disulfides stabilise this stretch: Cys-7-Cys-15 and Cys-38-Cys-46.

The protein belongs to the protamine P1 family. As to quaternary structure, cross-linked by interchain disulfide bonds around the DNA-helix. As to expression, testis.

It localises to the nucleus. The protein localises to the chromosome. Functionally, protamines substitute for histones in the chromatin of sperm during the haploid phase of spermatogenesis. They compact sperm DNA into a highly condensed, stable and inactive complex. This is Sperm protamine P1 (PRM1) from Equus caballus (Horse).